The following is a 72-amino-acid chain: UPF0154 protein YneF (72 aa).

The chain crosses the membrane as a helical span at residues 4 to 24; that stretch reads WVGILVGVVALLIGVALGFFI.

The protein belongs to the UPF0154 family.

It localises to the membrane. This chain is UPF0154 protein YneF (yneF), found in Bacillus subtilis (strain 168).